Here is a 768-residue protein sequence, read N- to C-terminus: Calcium up-regulated protein G (768 aa).

A disordered region spans residues 1–22 (MINIEDISKSSNQSEEKQLKST). 2 Ricin B-type lectin domains span residues 1–107 (MINI…WTID) and 100–248 (KTQI…WGIN).

This sequence belongs to the cup family.

It is found in the cytoplasm. The protein localises to the membrane. May play an important role in stabilizing and/or regulating the cell membrane during Ca(2+) stress or certain stages of development. The sequence is that of Calcium up-regulated protein G (cupG) from Dictyostelium discoideum (Social amoeba).